The chain runs to 645 residues: Threonine--tRNA ligase (645 aa).

Positions 1-63 constitute a TGS domain; that stretch reads MEQINIQFPD…ETDGSIEIVT (63 aa). Positions 242–540 are catalytic; sequence DHRKIGKELE…LTEETKGAFP (299 aa). Positions 336, 387, and 517 each coordinate Zn(2+).

This sequence belongs to the class-II aminoacyl-tRNA synthetase family. In terms of assembly, homodimer. Zn(2+) is required as a cofactor.

Its subcellular location is the cytoplasm. The catalysed reaction is tRNA(Thr) + L-threonine + ATP = L-threonyl-tRNA(Thr) + AMP + diphosphate + H(+). In terms of biological role, catalyzes the attachment of threonine to tRNA(Thr) in a two-step reaction: L-threonine is first activated by ATP to form Thr-AMP and then transferred to the acceptor end of tRNA(Thr). Also edits incorrectly charged L-seryl-tRNA(Thr). In Staphylococcus aureus (strain bovine RF122 / ET3-1), this protein is Threonine--tRNA ligase.